Consider the following 218-residue polypeptide: uncharacterized protein (218 aa).

Residues 1–24 (MAAQPQAPSAGGRPRAGKAVKSVA) are disordered. The 61-residue stretch at 28-88 (KLSRESIVEG…AVRIRVIDDI (61 aa)) folds into the HTH tetR-type domain. The H-T-H motif DNA-binding region spans 51–70 (TINALATQLGTKGPSLYNHV). T57 carries the post-translational modification Phosphothreonine; by PknH.

Post-translationally, phosphorylated on Thr-57 by PknH.

This is an uncharacterized protein from Mycobacterium tuberculosis (strain ATCC 25618 / H37Rv).